The chain runs to 227 residues: ATP-dependent dethiobiotin synthetase BioD (227 aa).

Position 13–18 (13–18 (DIGKTY)) interacts with ATP. Thr17 is a Mg(2+) binding site. Residue Lys38 is part of the active site. Residue Ser42 participates in substrate binding. ATP is bound by residues Asp55, 116–119 (EGSG), and 179–180 (NN). Positions 55 and 116 each coordinate Mg(2+).

Belongs to the dethiobiotin synthetase family. As to quaternary structure, homodimer. Requires Mg(2+) as cofactor.

The protein resides in the cytoplasm. The enzyme catalyses (7R,8S)-7,8-diammoniononanoate + CO2 + ATP = (4R,5S)-dethiobiotin + ADP + phosphate + 3 H(+). Its pathway is cofactor biosynthesis; biotin biosynthesis; biotin from 7,8-diaminononanoate: step 1/2. Its function is as follows. Catalyzes a mechanistically unusual reaction, the ATP-dependent insertion of CO2 between the N7 and N8 nitrogen atoms of 7,8-diaminopelargonic acid (DAPA, also called 7,8-diammoniononanoate) to form a ureido ring. This Clostridium botulinum (strain Alaska E43 / Type E3) protein is ATP-dependent dethiobiotin synthetase BioD.